A 67-amino-acid chain; its full sequence is Alpha-toxin Tf3 (67 aa).

An LCN-type CS-alpha/beta domain is found at 2-63 (KDGYPVEGDN…EPTKTNGRCK (62 aa)). 4 disulfide bridges follow: Cys12–Cys62, Cys16–Cys38, Cys24–Cys45, and Cys28–Cys47. A Proline amide modification is found at Pro64.

The protein belongs to the long (4 C-C) scorpion toxin superfamily. Sodium channel inhibitor family. Alpha subfamily. In terms of tissue distribution, expressed by the venom gland.

It is found in the secreted. Its function is as follows. Alpha toxins bind voltage-independently at site-3 of sodium channels (Nav) and inhibit the inactivation of the activated channels, thereby blocking neuronal transmission. The polypeptide is Alpha-toxin Tf3 (Tityus fasciolatus (Central Brazilian scorpion)).